The following is a 221-amino-acid chain: UPF0758 protein KPN78578_39390 (221 aa).

The MPN domain occupies 99 to 221; the sequence is ALVTPSMTRE…YVSFAERGWI (123 aa). Zn(2+) contacts are provided by His170, His172, and Asp183. The short motif at 170 to 183 is the JAMM motif element; the sequence is HNHPSGSPEPSQAD.

Belongs to the UPF0758 family. YicR subfamily.

The chain is UPF0758 protein KPN78578_39390 from Klebsiella pneumoniae subsp. pneumoniae (strain ATCC 700721 / MGH 78578).